The chain runs to 100 residues: Small ribosomal subunit protein uS14 (100 aa).

This sequence belongs to the universal ribosomal protein uS14 family. In terms of assembly, part of the 30S ribosomal subunit. Contacts proteins S3 and S10.

Functionally, binds 16S rRNA, required for the assembly of 30S particles and may also be responsible for determining the conformation of the 16S rRNA at the A site. The sequence is that of Small ribosomal subunit protein uS14 from Synechococcus sp. (strain CC9311).